The primary structure comprises 133 residues: ATP synthase epsilon chain (133 aa).

It belongs to the ATPase epsilon chain family. As to quaternary structure, F-type ATPases have 2 components, CF(1) - the catalytic core - and CF(0) - the membrane proton channel. CF(1) has five subunits: alpha(3), beta(3), gamma(1), delta(1), epsilon(1). CF(0) has three main subunits: a, b and c.

Its subcellular location is the cell inner membrane. Functionally, produces ATP from ADP in the presence of a proton gradient across the membrane. In Paramagnetospirillum magneticum (strain ATCC 700264 / AMB-1) (Magnetospirillum magneticum), this protein is ATP synthase epsilon chain.